The primary structure comprises 465 residues: Gamma-aminobutyric acid receptor subunit rho-2 (465 aa).

Residues 1-20 (MPYLMRLALVLFCLMALVES) form the signal peptide. The Extracellular segment spans residues 21-260 (RKPRRKRWTG…LYINFTLRRH (240 aa)). Position 105 (R105) interacts with 4-aminobutanoate. N120 is a glycosylation site (N-linked (GlcNAc...) asparagine). Residue S169 participates in 4-aminobutanoate binding. C178 and C192 form a disulfide bridge. A 4-aminobutanoate-binding site is contributed by E197. Residue N254 is glycosylated (N-linked (GlcNAc...) asparagine). A helical membrane pass occupies residues 261-281 (IFFFLLQTYFPATLMVMLSWV). Over 282–293 (SFWIDHRAVPAR) the chain is Cytoplasmic. Residues 294–314 (VSLGIMTVLTMSTIITGVNAS) traverse the membrane as a helical segment. The Extracellular segment spans residues 315–325 (MPRVSYIRAVD). The helical transmembrane segment at 326–346 (IYLWVSFVFVFLSVLEYAAVN) threads the bilayer. Topologically, residues 347–443 (YLTTLQEQKE…IFQNTHAIDK (97 aa)) are cytoplasmic. A helical membrane pass occupies residues 444–464 (YSRLIFPAFYIVFNLIYWSVF). A topological domain (extracellular) is located at residue S465.

The protein belongs to the ligand-gated ion channel (TC 1.A.9) family. Gamma-aminobutyric acid receptor (TC 1.A.9.5) subfamily. GABRR2 sub-subfamily. In terms of assembly, three rho subunits (rho-1/GBRR1, rho-2/GBRR2 and rho-3/GBRR3) coassemble either to form functional homopentamers or heteropentamers. Rho-2 is unable to form a functional homopentamer. Interacts with SQSTM1. Expressed in the cerebellum.

It localises to the postsynaptic cell membrane. Its subcellular location is the cell membrane. The enzyme catalyses chloride(in) = chloride(out). Rho subunit of the pentameric ligand-gated chloride channels responsible for mediating the effects of gamma-aminobutyric acid (GABA), the major inhibitory neurotransmitter in the brain. Rho-containing GABA-gated chloride channels are a subclass of GABA(A) receptors (GABAARs) entirely composed of rho subunits, where GABA molecules bind at the rho intersubunit interfaces. When activated by GABA, rho-GABAARs selectively allow the flow of chloride anions across the cell membrane down their electrochemical gradient. Rho-2 GABAARs may contribute to the regulation of glial development in the cerebellum by controlling extrasynaptic transmission. Rho-2 GABAARs are also involved in neuronal tonic (extrasynaptic) and phasic (synaptic) transmission in the Purkinje neurons of the cerebellum. Rho-2 GABAARs expressed in retina may play a role in retinal neurotransmission. This chain is Gamma-aminobutyric acid receptor subunit rho-2, found in Mus musculus (Mouse).